The primary structure comprises 381 residues: Probable tRNA sulfurtransferase (381 aa).

The 104-residue stretch at 52–155 (LTNLDALKYV…DASTYIFIDY (104 aa)) folds into the THUMP domain. ATP-binding positions include 173–174 (LM), 198–199 (NF), Arg255, Gly277, and Gln286.

The protein belongs to the ThiI family.

Its subcellular location is the cytoplasm. The enzyme catalyses [ThiI sulfur-carrier protein]-S-sulfanyl-L-cysteine + a uridine in tRNA + 2 reduced [2Fe-2S]-[ferredoxin] + ATP + H(+) = [ThiI sulfur-carrier protein]-L-cysteine + a 4-thiouridine in tRNA + 2 oxidized [2Fe-2S]-[ferredoxin] + AMP + diphosphate. It carries out the reaction [ThiS sulfur-carrier protein]-C-terminal Gly-Gly-AMP + S-sulfanyl-L-cysteinyl-[cysteine desulfurase] + AH2 = [ThiS sulfur-carrier protein]-C-terminal-Gly-aminoethanethioate + L-cysteinyl-[cysteine desulfurase] + A + AMP + 2 H(+). Its pathway is cofactor biosynthesis; thiamine diphosphate biosynthesis. Functionally, catalyzes the ATP-dependent transfer of a sulfur to tRNA to produce 4-thiouridine in position 8 of tRNAs, which functions as a near-UV photosensor. Also catalyzes the transfer of sulfur to the sulfur carrier protein ThiS, forming ThiS-thiocarboxylate. This is a step in the synthesis of thiazole, in the thiamine biosynthesis pathway. The sulfur is donated as persulfide by IscS. This chain is Probable tRNA sulfurtransferase, found in Metamycoplasma arthritidis (strain 158L3-1) (Mycoplasma arthritidis).